We begin with the raw amino-acid sequence, 365 residues long: WAT1-related protein At4g01430 (365 aa).

10 helical membrane-spanning segments follow: residues 7-27, 39-59, 76-96, 100-120, 132-152, 183-203, 216-236, 250-270, 280-300, and 305-325; these read WAPVIVMLISSVAMGSVNALV, IFGAYRMAISALILVPFSYIW, FISGLLGASLMQFFFLLGLSY, TVSMALVSMLPAITFALALIF, AGVLKVMGTLICIMGAMLLTF, WLLGCLYLVIGTVLLSLWMLF, YSSTCLMSVFASFQCAILSLY, FVILVTLYAGIVGQAMSTVVT, VFVSTFSPVSLVAATLFDFLI, and LYLGSILGSVVTITGLYVFLW. The 132-residue stretch at 20–151 folds into the EamA 1 domain; it reads MGSVNALVKK…ICIMGAMLLT (132 aa). The region spanning 216–324 is the EamA 2 domain; the sequence is YSSTCLMSVF…VTITGLYVFL (109 aa). Residues 339–365 form a disordered region; that stretch reads LNSSQFSQNKDNEDHTIANHKDTNLPV. The span at 348-365 shows a compositional bias: basic and acidic residues; sequence KDNEDHTIANHKDTNLPV.

Belongs to the drug/metabolite transporter (DMT) superfamily. Plant drug/metabolite exporter (P-DME) (TC 2.A.7.4) family.

Its subcellular location is the membrane. The sequence is that of WAT1-related protein At4g01430 from Arabidopsis thaliana (Mouse-ear cress).